A 447-amino-acid polypeptide reads, in one-letter code: Probable glycine dehydrogenase (decarboxylating) subunit 1 (447 aa).

This sequence belongs to the GcvP family. N-terminal subunit subfamily. As to quaternary structure, the glycine cleavage system is composed of four proteins: P, T, L and H. In this organism, the P 'protein' is a heterodimer of two subunits.

It catalyses the reaction N(6)-[(R)-lipoyl]-L-lysyl-[glycine-cleavage complex H protein] + glycine + H(+) = N(6)-[(R)-S(8)-aminomethyldihydrolipoyl]-L-lysyl-[glycine-cleavage complex H protein] + CO2. Functionally, the glycine cleavage system catalyzes the degradation of glycine. The P protein binds the alpha-amino group of glycine through its pyridoxal phosphate cofactor; CO(2) is released and the remaining methylamine moiety is then transferred to the lipoamide cofactor of the H protein. The protein is Probable glycine dehydrogenase (decarboxylating) subunit 1 of Azorhizobium caulinodans (strain ATCC 43989 / DSM 5975 / JCM 20966 / LMG 6465 / NBRC 14845 / NCIMB 13405 / ORS 571).